The sequence spans 452 residues: Probable cysteine protease RD21C (452 aa).

The first 29 residues, 1–29, serve as a signal peptide directing secretion; sequence MATSIKSITLALLIFSVLLISLSLGSVTA. A propeptide spans 30–128 (activation peptide); the sequence is TETTRNEAEA…EKYLYKVGDS (99 aa). N-linked (GlcNAc...) asparagine glycosylation occurs at N82. 5 cysteine pairs are disulfide-bonded: C150-C192, C184-C226, C284-C335, C363-C375, and C369-C390. Residue C153 is part of the active site. Residues H290 and N310 contribute to the active site. The propeptide at 346 to 452 is removed in mature form; it reads KSSGSNPPKP…KSTNMLVGSA (107 aa).

It belongs to the peptidase C1 family. In terms of assembly, interacts with WSCP.

In terms of biological role, probable thiol protease. The chain is Probable cysteine protease RD21C from Arabidopsis thaliana (Mouse-ear cress).